The following is a 346-amino-acid chain: Methylthioribose-1-phosphate isomerase (346 aa).

Residues 46–48 (RGA), Arg-89, and Gln-196 each bind substrate. Asp-237 acts as the Proton donor in catalysis. Position 247 to 248 (247 to 248 (NK)) interacts with substrate.

The protein belongs to the eIF-2B alpha/beta/delta subunits family. MtnA subfamily.

It carries out the reaction 5-(methylsulfanyl)-alpha-D-ribose 1-phosphate = 5-(methylsulfanyl)-D-ribulose 1-phosphate. It functions in the pathway amino-acid biosynthesis; L-methionine biosynthesis via salvage pathway; L-methionine from S-methyl-5-thio-alpha-D-ribose 1-phosphate: step 1/6. Functionally, catalyzes the interconversion of methylthioribose-1-phosphate (MTR-1-P) into methylthioribulose-1-phosphate (MTRu-1-P). This is Methylthioribose-1-phosphate isomerase from Geobacter sulfurreducens (strain ATCC 51573 / DSM 12127 / PCA).